A 380-amino-acid chain; its full sequence is Flap endonuclease 1-A (380 aa).

An N-domain region spans residues 1 to 105 (MGIKGLTKLL…EELAKRFSKR (105 aa)). Position 34 (aspartate 34) interacts with Mg(2+). Position 71 (arginine 71) interacts with DNA. Positions 87, 159, 161, 180, and 182 each coordinate Mg(2+). The interval 123–254 (AVEKLSKRTV…QTALKLIRQH (132 aa)) is I-domain. Residue glutamate 159 coordinates DNA. DNA-binding residues include glycine 232 and aspartate 234. Mg(2+) is bound at residue aspartate 234. Residues 336-344 (SQGRLESFF) form an interaction with PCNA region. Residues 351–380 (SAPLKRKETSDKTSKAAAANKKTKAGGKKK) are disordered. Over residues 355–364 (KRKETSDKTS) the composition is skewed to basic and acidic residues. A compositionally biased stretch (basic residues) spans 371–380 (KKTKAGGKKK).

Belongs to the XPG/RAD2 endonuclease family. FEN1 subfamily. Interacts with PCNA. Three molecules of FEN1 bind to one PCNA trimer with each molecule binding to one PCNA monomer. PCNA stimulates the nuclease activity without altering cleavage specificity. The cofactor is Mg(2+). In terms of processing, phosphorylated. Phosphorylation upon DNA damage induces relocalization to the nuclear plasma.

The protein localises to the nucleus. It localises to the nucleolus. Its subcellular location is the nucleoplasm. It is found in the mitochondrion. Its function is as follows. Structure-specific nuclease with 5'-flap endonuclease and 5'-3' exonuclease activities involved in DNA replication and repair. During DNA replication, cleaves the 5'-overhanging flap structure that is generated by displacement synthesis when DNA polymerase encounters the 5'-end of a downstream Okazaki fragment. It enters the flap from the 5'-end and then tracks to cleave the flap base, leaving a nick for ligation. Also involved in the long patch base excision repair (LP-BER) pathway, by cleaving within the apurinic/apyrimidinic (AP) site-terminated flap. Acts as a genome stabilization factor that prevents flaps from equilibrating into structures that lead to duplications and deletions. Also possesses 5'-3' exonuclease activity on nicked or gapped double-stranded DNA, and exhibits RNase H activity. Also involved in replication and repair of rDNA and in repairing mitochondrial DNA. This Sorghum bicolor (Sorghum) protein is Flap endonuclease 1-A.